Consider the following 96-residue polypeptide: Aspartyl/glutamyl-tRNA(Asn/Gln) amidotransferase subunit C (96 aa).

This sequence belongs to the GatC family. In terms of assembly, heterotrimer of A, B and C subunits.

It catalyses the reaction L-glutamyl-tRNA(Gln) + L-glutamine + ATP + H2O = L-glutaminyl-tRNA(Gln) + L-glutamate + ADP + phosphate + H(+). It carries out the reaction L-aspartyl-tRNA(Asn) + L-glutamine + ATP + H2O = L-asparaginyl-tRNA(Asn) + L-glutamate + ADP + phosphate + 2 H(+). In terms of biological role, allows the formation of correctly charged Asn-tRNA(Asn) or Gln-tRNA(Gln) through the transamidation of misacylated Asp-tRNA(Asn) or Glu-tRNA(Gln) in organisms which lack either or both of asparaginyl-tRNA or glutaminyl-tRNA synthetases. The reaction takes place in the presence of glutamine and ATP through an activated phospho-Asp-tRNA(Asn) or phospho-Glu-tRNA(Gln). This Bacillus anthracis (strain A0248) protein is Aspartyl/glutamyl-tRNA(Asn/Gln) amidotransferase subunit C.